The chain runs to 1071 residues: ATP-dependent helicase/deoxyribonuclease subunit B (1071 aa).

Belongs to the helicase family. AddB/RexB type 2 subfamily. As to quaternary structure, heterodimer of AddA and RexB. Requires Mg(2+) as cofactor.

In terms of biological role, the heterodimer acts as both an ATP-dependent DNA helicase and an ATP-dependent, dual-direction single-stranded exonuclease. Recognizes the chi site generating a DNA molecule suitable for the initiation of homologous recombination. This subunit has 5' -&gt; 3' nuclease activity but not helicase activity. The protein is ATP-dependent helicase/deoxyribonuclease subunit B of Streptococcus pyogenes serotype M49 (strain NZ131).